Reading from the N-terminus, the 1068-residue chain is Carbamoyl phosphate synthase large chain (1068 aa).

Residues 1 to 401 form a carboxyphosphate synthetic domain region; sequence MPLNKDIKKV…AFLKGTRSLE (401 aa). Residues Arg129, Arg169, Gly175, Gly176, Lys208, Val210, Glu215, Gly241, Ile242, His243, Gln284, and Glu298 each coordinate ATP. Residues 133–327 enclose the ATP-grasp 1 domain; sequence RNVMSRINEP…IAKVASKIAL (195 aa). Mg(2+)-binding residues include Gln284, Glu298, and Asn300. Mn(2+)-binding residues include Gln284, Glu298, and Asn300. The oligomerization domain stretch occupies residues 402–549; the sequence is IGKYSLEHKK…YSTYDVYDEV (148 aa). A carbamoyl phosphate synthetic domain region spans residues 550–932; the sequence is EVSKNKKVIV…ALYKGFIGAN (383 aa). In terms of domain architecture, ATP-grasp 2 spans 674–864; that stretch reads DELLEKLKIA…IVDIATRVML (191 aa). Positions 710, 749, 751, 755, 780, 781, 782, 783, 823, and 835 each coordinate ATP. Mg(2+) contacts are provided by Gln823, Glu835, and Asn837. The Mn(2+) site is built by Gln823, Glu835, and Asn837. The MGS-like domain occupies 933–1068; the sequence is ISIKKEKGTV…ETLYIFDLSN (136 aa). Residues 933 to 1068 form an allosteric domain region; it reads ISIKKEKGTV…ETLYIFDLSN (136 aa).

The protein belongs to the CarB family. In terms of assembly, composed of two chains; the small (or glutamine) chain promotes the hydrolysis of glutamine to ammonia, which is used by the large (or ammonia) chain to synthesize carbamoyl phosphate. Tetramer of heterodimers (alpha,beta)4. Requires Mg(2+) as cofactor. Mn(2+) serves as cofactor.

The catalysed reaction is hydrogencarbonate + L-glutamine + 2 ATP + H2O = carbamoyl phosphate + L-glutamate + 2 ADP + phosphate + 2 H(+). The enzyme catalyses hydrogencarbonate + NH4(+) + 2 ATP = carbamoyl phosphate + 2 ADP + phosphate + 2 H(+). Its pathway is amino-acid biosynthesis; L-arginine biosynthesis; carbamoyl phosphate from bicarbonate: step 1/1. It participates in pyrimidine metabolism; UMP biosynthesis via de novo pathway; (S)-dihydroorotate from bicarbonate: step 1/3. In terms of biological role, large subunit of the glutamine-dependent carbamoyl phosphate synthetase (CPSase). CPSase catalyzes the formation of carbamoyl phosphate from the ammonia moiety of glutamine, carbonate, and phosphate donated by ATP, constituting the first step of 2 biosynthetic pathways, one leading to arginine and/or urea and the other to pyrimidine nucleotides. The large subunit (synthetase) binds the substrates ammonia (free or transferred from glutamine from the small subunit), hydrogencarbonate and ATP and carries out an ATP-coupled ligase reaction, activating hydrogencarbonate by forming carboxy phosphate which reacts with ammonia to form carbamoyl phosphate. The polypeptide is Carbamoyl phosphate synthase large chain (Clostridium botulinum (strain Langeland / NCTC 10281 / Type F)).